A 460-amino-acid polypeptide reads, in one-letter code: Bifunctional protein GlmU (460 aa).

Positions 1 to 229 (MTNYAIILAA…FNESLGVNDR (229 aa)) are pyrophosphorylase. Residues 8-11 (LAAG), lysine 22, glutamine 72, and 77-78 (GT) contribute to the UDP-N-acetyl-alpha-D-glucosamine site. Mg(2+) is bound at residue aspartate 102. The UDP-N-acetyl-alpha-D-glucosamine site is built by glycine 139, glutamate 154, asparagine 169, and asparagine 227. Residue asparagine 227 participates in Mg(2+) binding. The interval 230 to 250 (VALATAETVMRQRITQKHMVN) is linker. Residues 251-460 (GVTFQNPETV…RLAHHPSRSK (210 aa)) are N-acetyltransferase. Residues arginine 332 and lysine 350 each contribute to the UDP-N-acetyl-alpha-D-glucosamine site. The active-site Proton acceptor is the histidine 362. Residues tyrosine 365 and asparagine 376 each contribute to the UDP-N-acetyl-alpha-D-glucosamine site. Residues alanine 379, 385 to 386 (NY), serine 404, alanine 422, and arginine 439 contribute to the acetyl-CoA site.

The protein in the N-terminal section; belongs to the N-acetylglucosamine-1-phosphate uridyltransferase family. In the C-terminal section; belongs to the transferase hexapeptide repeat family. As to quaternary structure, homotrimer. Mg(2+) is required as a cofactor.

Its subcellular location is the cytoplasm. It carries out the reaction alpha-D-glucosamine 1-phosphate + acetyl-CoA = N-acetyl-alpha-D-glucosamine 1-phosphate + CoA + H(+). The catalysed reaction is N-acetyl-alpha-D-glucosamine 1-phosphate + UTP + H(+) = UDP-N-acetyl-alpha-D-glucosamine + diphosphate. It functions in the pathway nucleotide-sugar biosynthesis; UDP-N-acetyl-alpha-D-glucosamine biosynthesis; N-acetyl-alpha-D-glucosamine 1-phosphate from alpha-D-glucosamine 6-phosphate (route II): step 2/2. The protein operates within nucleotide-sugar biosynthesis; UDP-N-acetyl-alpha-D-glucosamine biosynthesis; UDP-N-acetyl-alpha-D-glucosamine from N-acetyl-alpha-D-glucosamine 1-phosphate: step 1/1. It participates in bacterial outer membrane biogenesis; LPS lipid A biosynthesis. Functionally, catalyzes the last two sequential reactions in the de novo biosynthetic pathway for UDP-N-acetylglucosamine (UDP-GlcNAc). The C-terminal domain catalyzes the transfer of acetyl group from acetyl coenzyme A to glucosamine-1-phosphate (GlcN-1-P) to produce N-acetylglucosamine-1-phosphate (GlcNAc-1-P), which is converted into UDP-GlcNAc by the transfer of uridine 5-monophosphate (from uridine 5-triphosphate), a reaction catalyzed by the N-terminal domain. This chain is Bifunctional protein GlmU, found in Streptococcus pyogenes serotype M5 (strain Manfredo).